Consider the following 860-residue polypeptide: Translation initiation factor IF-2 (860 aa).

Over residues 1–11 (MSDTKSGDDKT) the composition is skewed to basic and acidic residues. The disordered stretch occupies residues 1–265 (MSDTKSGDDK…MRRRQEKFKR (265 aa)). Low complexity predominate over residues 79–88 (AAPVVQEAPK). A compositionally biased stretch (basic and acidic residues) spans 110–183 (SRSEMEARRR…RRRAEEEARR (74 aa)). The tr-type G domain occupies 358–525 (PRPPVVTIMG…AILLQAEILD (168 aa)). The G1 stretch occupies residues 367–374 (GHVDHGKT). Position 367-374 (367-374 (GHVDHGKT)) interacts with GTP. Positions 392-396 (GITQH) are G2. Positions 413–416 (DTPG) are G3. GTP-binding positions include 413–417 (DTPGH) and 467–470 (NKID). Residues 467-470 (NKID) form a G4 region. The interval 503–505 (SAT) is G5.

Belongs to the TRAFAC class translation factor GTPase superfamily. Classic translation factor GTPase family. IF-2 subfamily.

It is found in the cytoplasm. Functionally, one of the essential components for the initiation of protein synthesis. Protects formylmethionyl-tRNA from spontaneous hydrolysis and promotes its binding to the 30S ribosomal subunits. Also involved in the hydrolysis of GTP during the formation of the 70S ribosomal complex. The protein is Translation initiation factor IF-2 of Mesorhizobium japonicum (strain LMG 29417 / CECT 9101 / MAFF 303099) (Mesorhizobium loti (strain MAFF 303099)).